The chain runs to 135 residues: MLSPKRTRFRKQHRGRMKGISYRGNYICFGRYALQALEPAWITSRQIEAGRRAMTRYARRGGKIWVRIFPDKPVTVRPTETRMGSGKGSPEYWVSVVKPGRILYEMGGVSETVARAAIEIAACKMPIRTQFVIAG.

Belongs to the universal ribosomal protein uL16 family. In terms of assembly, part of the 50S ribosomal subunit.

The protein localises to the plastid. It localises to the chloroplast. The protein is Large ribosomal subunit protein uL16c of Drimys granadensis.